The primary structure comprises 259 residues: Probable ABC transporter permease protein RF_0080 (259 aa).

A run of 5 helical transmembrane segments spans residues 13–35, 49–69, 148–168, 195–215, and 237–257; these read TIKFAQSVGSFSLFSFAAVSSII, LFIGFHSLPVVAMTTFFSGAV, VIAAIITMPCLVLIGDIIGVM, PIDVISGLVKAGVFGFIISII, and AVVNSSILILISNYLITELFF.

The protein belongs to the MlaE permease family.

The protein localises to the cell inner membrane. In terms of biological role, could be part of an ABC transporter complex. This chain is Probable ABC transporter permease protein RF_0080, found in Rickettsia felis (strain ATCC VR-1525 / URRWXCal2) (Rickettsia azadi).